Consider the following 217-residue polypeptide: Probable coenzyme A transferase subunit beta (217 aa).

E50 is a catalytic residue.

Belongs to the 3-oxoacid CoA-transferase subunit B family. As to quaternary structure, heterodimer of a subunit alpha and a subunit beta.

The protein is Probable coenzyme A transferase subunit beta (yodR) of Bacillus subtilis (strain 168).